The following is a 379-amino-acid chain: tRNA(Met) cytidine acetate ligase (379 aa).

Residues 7-20, glycine 100, asparagine 153, and arginine 178 each bind ATP; that span reads ITEYNPFHNGHQYH.

This sequence belongs to the TmcAL family.

It is found in the cytoplasm. It carries out the reaction cytidine(34) in elongator tRNA(Met) + acetate + ATP = N(4)-acetylcytidine(34) in elongator tRNA(Met) + AMP + diphosphate. Functionally, catalyzes the formation of N(4)-acetylcytidine (ac(4)C) at the wobble position of elongator tRNA(Met), using acetate and ATP as substrates. First activates an acetate ion to form acetyladenylate (Ac-AMP) and then transfers the acetyl group to tRNA to form ac(4)C34. The polypeptide is tRNA(Met) cytidine acetate ligase (Staphylococcus aureus (strain Mu3 / ATCC 700698)).